A 328-amino-acid chain; its full sequence is MNDNAFTFQTLHPETIMDALFEQGIMVDSGLTPLNSYENRVYQFQDEDRRRFVVKFYRPERWSVDQIREEHQFALELVKDEVPVAAPLAFNGQTLLAHQGYHYAIFPSVGGRQFEADNIDQMEAVGRYLGRLHQTGRKRPFTFRPDIGLAEYLFEPRQVFEDAALIPSGQKAAFLKATDTLLSAVTECWRTDFATLRLHGDCHAGNILWRDGPLFVDLDDARNGPAIQDLWMLLNGDKAEQRMQLETIIEAYEEVSEFDTAEIGLIEPLRAMRLVYYLAWLIRRWGDPAFPKNFPWLTGEDYWQRQTTTFIEQTKILHEPPLQLTPMY.

Aspartate 201 (proton acceptor) is an active-site residue. Residues asparagine 206 and aspartate 217 each coordinate Mg(2+). Residue aspartate 217 is part of the active site.

The protein belongs to the SrkA/RdoA protein kinase family. As to quaternary structure, monomer. Requires Mg(2+) as cofactor.

The protein localises to the cytoplasm. The catalysed reaction is L-seryl-[protein] + ATP = O-phospho-L-seryl-[protein] + ADP + H(+). The enzyme catalyses L-threonyl-[protein] + ATP = O-phospho-L-threonyl-[protein] + ADP + H(+). A protein kinase that (auto)phosphorylates on Ser and Thr residues, probably involved in the extracytoplasmic stress response. Probably acts to suppress the effects of stress linked to accumulation of reactive oxygen species. The protein is Serine/threonine protein kinase RdoA of Salmonella typhimurium (strain LT2 / SGSC1412 / ATCC 700720).